A 243-amino-acid polypeptide reads, in one-letter code: Protein HUA2 (243 aa).

The protein resides in the cytoplasm. Functionally, may have a role in actin patch assembly. The protein is Protein HUA2 (HUA2) of Saccharomyces cerevisiae (strain ATCC 204508 / S288c) (Baker's yeast).